Reading from the N-terminus, the 356-residue chain is MVSHEENTSIVEWFLGPHPYTYPPYGIEMIHEDDEVAVAHHHHHHQSGEYYREYEDHRSSDVDNDEIIARTLQDDFLQLEIAESNDYSHQNQQQQHQQEGYTNNYSNNNNGYAWNDQSPAVDYSSEWIGNDNDQDGRSDDSVNVFSCSSPSDTDEYVYSWESDQCDADGEFGRRLNQMVPIPYIPKINGEIPPEEEAVSDHERLRNRLEMFDFTEVKVPGDGNCQFRALADQLYKTADRHKHVRRQIVKQLKSRPDSYQGYVPMDFSDYLRKMSRSGEWGDHVTLQAAADAYRVKIVVLTSFKDTCYIEILPTSQESKGVIFLSFWAEVHYNAIYLNRDTSETELQRKRKWWRFGN.

Positions 86-117 (DYSHQNQQQQHQQEGYTNNYSNNNNGYAWNDQ) are disordered. Positions 89–115 (HQNQQQQHQQEGYTNNYSNNNNGYAWN) are enriched in low complexity. The 125-residue stretch at 213-337 (FTEVKVPGDG…EVHYNAIYLN (125 aa)) folds into the OTU domain. The active site involves Asp221. The active-site Nucleophile is Cys224. His330 is a catalytic residue.

It belongs to the peptidase C85 family.

It catalyses the reaction Thiol-dependent hydrolysis of ester, thioester, amide, peptide and isopeptide bonds formed by the C-terminal Gly of ubiquitin (a 76-residue protein attached to proteins as an intracellular targeting signal).. In terms of biological role, hydrolase that can remove conjugated ubiquitin from proteins in vitro and may therefore play an important regulatory role at the level of protein turnover by preventing degradation. Cysteine protease with a preference for 'Lys-63' over 'Lys-48' over 'Met-1' -linked ubiquitin (UB) tetramers as substrates. Also cleaves RUB-GST fusion. The polypeptide is OVARIAN TUMOR DOMAIN-containing deubiquitinating enzyme 10 (Arabidopsis thaliana (Mouse-ear cress)).